The sequence spans 226 residues: Holliday junction branch migration complex subunit RuvA (226 aa).

A domain I region spans residues 1-67 (MITSVYAKIE…AINKELYAFK (67 aa)). Residues 68–145 (SLKEKEWFKA…YLKNQIVVSD (78 aa)) form a domain II region. The segment at 146–167 (KVEPQIDDDEKIDDSKDLNDDE) is flexible linker. The tract at residues 168–226 (LLSEIVIEAIDCLISLGYKQEQIKTALAEIDLKNESINDSADLVAVIIKQIGLRTSEVS) is domain III.

It belongs to the RuvA family. As to quaternary structure, homotetramer. Forms an RuvA(8)-RuvB(12)-Holliday junction (HJ) complex. HJ DNA is sandwiched between 2 RuvA tetramers; dsDNA enters through RuvA and exits via RuvB. An RuvB hexamer assembles on each DNA strand where it exits the tetramer. Each RuvB hexamer is contacted by two RuvA subunits (via domain III) on 2 adjacent RuvB subunits; this complex drives branch migration. In the full resolvosome a probable DNA-RuvA(4)-RuvB(12)-RuvC(2) complex forms which resolves the HJ.

The protein resides in the cytoplasm. Its function is as follows. The RuvA-RuvB-RuvC complex processes Holliday junction (HJ) DNA during genetic recombination and DNA repair, while the RuvA-RuvB complex plays an important role in the rescue of blocked DNA replication forks via replication fork reversal (RFR). RuvA specifically binds to HJ cruciform DNA, conferring on it an open structure. The RuvB hexamer acts as an ATP-dependent pump, pulling dsDNA into and through the RuvAB complex. HJ branch migration allows RuvC to scan DNA until it finds its consensus sequence, where it cleaves and resolves the cruciform DNA. The polypeptide is Holliday junction branch migration complex subunit RuvA (Mycoplasmoides gallisepticum (strain R(low / passage 15 / clone 2)) (Mycoplasma gallisepticum)).